The chain runs to 92 residues: Alpha-conotoxin FrXXA 2 (92 aa).

The N-terminal stretch at 1–24 is a signal peptide; it reads MPKLEMMLLVLLILPLPYFDAAGG. A propeptide spanning residues 25–45 is cleaved from the precursor; sequence QAVQGDGHGDGMDRYLQRDDR. 4 disulfides stabilise this stretch: Cys63–Cys72, Cys68–Cys80, Cys73–Cys90, and Cys78–Cys92.

It belongs to the conotoxin D superfamily. Homodimer; disulfide-linked. In terms of processing, the homodimer contains 10 disulfide bonds. As to expression, expressed by the venom duct.

It is found in the secreted. Functionally, alpha-conotoxins act on postsynaptic membranes, they bind to the nicotinic acetylcholine receptors (nAChR) and thus inhibit them. Through its two C-terminal domains, this homodimeric protein would bind to two nAChR allosteric sites, located outside the nAChR C-loop of the principal binding face and at the adjacent binding interface in a clockwise direction. Component 4b which seems to correspond to this toxin blocks both neuronal and muscular subtypes: human alpha-7/CHRNA7 (IC(50)=125 nM), human alpha-3-beta-2 (CHRNA3-CHRNB2) (IC(50)=282 nM), human alpha-4-beta-2 (CHRNA4-CHRNB2) (IC(50)=697 nM), mouse adult muscular subtype alpha-1-beta-1-delta-epsilon (CHRNA1-CHRNB1-CHRND-CHRNE) (IC(50)=351 nM), and mouse fetal muscular subtype alpha-1-beta-1-gamma-delta (CHRNA1-CHRNB1-CHRNG-CHRND) (IC(50)=447 nM). It shows different dissociation rates towards the different subtypes, with a very slow rate towards alpha-7 subtype (almost irreversible), followed by the adult muscular subtype, the fetal muscular subtype, alpha-3-beta-2 and alpha-4-beta-2 (almost entirely reversible within a few minutes of washing). This is Alpha-conotoxin FrXXA 2 from Conus fergusoni (Ferguson's cone).